Here is a 25-residue protein sequence, read N- to C-terminus: Panurgine K (25 aa).

2 disulfides stabilise this stretch: C8–C23 and C11–C19.

The protein localises to the target cell membrane. Its subcellular location is the secreted. Its function is as follows. Antimicrobial peptide active against Gram-positive bacteria M.luteus (MIC=1.6 uM) and B.subtilis (MIC=3.3 uM). Less active against Gram-negative bacteria E.coli (MIC=63.3 uM) and yeast C.albicans (MIC=24.2 uM). Not active against S.aureus and P.aeruginosa. Has no hemolytic activity against human erythrocytes. Probably acts by disrupting membranes of target cells. The sequence is that of Panurgine K from Panurgus calcaratus (Solitary bee).